The following is a 266-amino-acid chain: 4-hydroxy-tetrahydrodipicolinate reductase (266 aa).

10–15 lines the NAD(+) pocket; sequence GPRGRM. Lysine 38 is an NADP(+) binding site. NAD(+)-binding positions include 99–101 and 125–128; these read GTT and APNF. Histidine 155 functions as the Proton donor/acceptor in the catalytic mechanism. Histidine 156 is a (S)-2,3,4,5-tetrahydrodipicolinate binding site. The active-site Proton donor is lysine 159. (S)-2,3,4,5-tetrahydrodipicolinate is bound at residue 165–166; sequence GT.

This sequence belongs to the DapB family.

It is found in the cytoplasm. The catalysed reaction is (S)-2,3,4,5-tetrahydrodipicolinate + NAD(+) + H2O = (2S,4S)-4-hydroxy-2,3,4,5-tetrahydrodipicolinate + NADH + H(+). It catalyses the reaction (S)-2,3,4,5-tetrahydrodipicolinate + NADP(+) + H2O = (2S,4S)-4-hydroxy-2,3,4,5-tetrahydrodipicolinate + NADPH + H(+). Its pathway is amino-acid biosynthesis; L-lysine biosynthesis via DAP pathway; (S)-tetrahydrodipicolinate from L-aspartate: step 4/4. In terms of biological role, catalyzes the conversion of 4-hydroxy-tetrahydrodipicolinate (HTPA) to tetrahydrodipicolinate. This Bacillus cereus (strain ZK / E33L) protein is 4-hydroxy-tetrahydrodipicolinate reductase.